Here is a 565-residue protein sequence, read N- to C-terminus: NAD-dependent malic enzyme (565 aa).

The Proton donor role is filled by Tyr-104. Arg-157 provides a ligand contact to NAD(+). The active-site Proton acceptor is Lys-175. The a divalent metal cation site is built by Glu-246, Asp-247, and Asp-270. NAD(+)-binding residues include Asp-270 and Asn-418.

This sequence belongs to the malic enzymes family. In terms of assembly, homotetramer. Mg(2+) is required as a cofactor. It depends on Mn(2+) as a cofactor.

The catalysed reaction is (S)-malate + NAD(+) = pyruvate + CO2 + NADH. It carries out the reaction oxaloacetate + H(+) = pyruvate + CO2. This Erwinia tasmaniensis (strain DSM 17950 / CFBP 7177 / CIP 109463 / NCPPB 4357 / Et1/99) protein is NAD-dependent malic enzyme.